We begin with the raw amino-acid sequence, 504 residues long: UDP-N-acetylmuramoylalanine--D-glutamate ligase (504 aa).

132 to 138 (GTNGKTT) contacts ATP. The disordered stretch occupies residues 284-310 (AQDRDATDEPAPTRRRKSESTAPPDIG).

This sequence belongs to the MurCDEF family.

The protein localises to the cytoplasm. It catalyses the reaction UDP-N-acetyl-alpha-D-muramoyl-L-alanine + D-glutamate + ATP = UDP-N-acetyl-alpha-D-muramoyl-L-alanyl-D-glutamate + ADP + phosphate + H(+). Its pathway is cell wall biogenesis; peptidoglycan biosynthesis. Cell wall formation. Catalyzes the addition of glutamate to the nucleotide precursor UDP-N-acetylmuramoyl-L-alanine (UMA). The protein is UDP-N-acetylmuramoylalanine--D-glutamate ligase of Paraburkholderia phymatum (strain DSM 17167 / CIP 108236 / LMG 21445 / STM815) (Burkholderia phymatum).